The chain runs to 646 residues: Phosphomethylpyrimidine synthase (646 aa).

Residues Asn235, Met264, Tyr293, His329, 349 to 351, 390 to 393, and Glu429 each bind substrate; these read SRG and DGLR. Residue His433 coordinates Zn(2+). Tyr456 is a substrate binding site. Zn(2+) is bound at residue His497. Positions 577, 580, and 585 each coordinate [4Fe-4S] cluster.

This sequence belongs to the ThiC family. As to quaternary structure, homodimer. The cofactor is [4Fe-4S] cluster.

It catalyses the reaction 5-amino-1-(5-phospho-beta-D-ribosyl)imidazole + S-adenosyl-L-methionine = 4-amino-2-methyl-5-(phosphooxymethyl)pyrimidine + CO + 5'-deoxyadenosine + formate + L-methionine + 3 H(+). The protein operates within cofactor biosynthesis; thiamine diphosphate biosynthesis. Its function is as follows. Catalyzes the synthesis of the hydroxymethylpyrimidine phosphate (HMP-P) moiety of thiamine from aminoimidazole ribotide (AIR) in a radical S-adenosyl-L-methionine (SAM)-dependent reaction. This is Phosphomethylpyrimidine synthase from Vibrio campbellii (strain ATCC BAA-1116).